We begin with the raw amino-acid sequence, 130 residues long: Cytochrome c-type biogenesis protein CcmE (130 aa).

Over 1 to 7 (MKKKHKR) the chain is Cytoplasmic. Residues 8 to 28 (LLITSGIFCFLSCAVFFILTT) traverse the membrane as a helical; Signal-anchor for type II membrane protein segment. At 29–130 (LKENISFFYT…DENYKPKVLK (102 aa)) the chain is on the extracellular side. Residues H120 and Y124 each coordinate heme.

Belongs to the CcmE/CycJ family.

Its subcellular location is the cell membrane. Functionally, heme chaperone required for the biogenesis of c-type cytochromes. Transiently binds heme delivered by CcmC and transfers the heme to apo-cytochromes in a process facilitated by CcmF and CcmH. The protein is Cytochrome c-type biogenesis protein CcmE of Wolbachia pipientis subsp. Culex pipiens (strain wPip).